Consider the following 135-residue polypeptide: Large ribosomal subunit protein uL16 (135 aa).

It belongs to the universal ribosomal protein uL16 family. Part of the 50S ribosomal subunit.

Its function is as follows. Binds 23S rRNA and is also seen to make contacts with the A and possibly P site tRNAs. The chain is Large ribosomal subunit protein uL16 from Bdellovibrio bacteriovorus (strain ATCC 15356 / DSM 50701 / NCIMB 9529 / HD100).